The following is a 58-amino-acid chain: Large ribosomal subunit protein uL24 (58 aa).

It belongs to the universal ribosomal protein uL24 family. In terms of assembly, part of the 50S ribosomal subunit.

One of two assembly initiator proteins, it binds directly to the 5'-end of the 23S rRNA, where it nucleates assembly of the 50S subunit. Its function is as follows. One of the proteins that surrounds the polypeptide exit tunnel on the outside of the subunit. The chain is Large ribosomal subunit protein uL24 (rplX) from Spiroplasma citri.